Here is a 658-residue protein sequence, read N- to C-terminus: Aspartate--tRNA ligase, mitochondrial (658 aa).

Residue glutamate 198 coordinates L-aspartate. An aspartate region spans residues 226–229 (QQYK). Position 248 (arginine 248) interacts with L-aspartate. Residues 248-250 (RDE) and glutamate 553 contribute to the ATP site. Arginine 560 contributes to the L-aspartate binding site. 604–607 (GFDR) provides a ligand contact to ATP.

Belongs to the class-II aminoacyl-tRNA synthetase family. Type 1 subfamily.

It is found in the mitochondrion matrix. It carries out the reaction tRNA(Asp) + L-aspartate + ATP = L-aspartyl-tRNA(Asp) + AMP + diphosphate. In terms of biological role, catalyzes the attachment of aspartate to tRNA(Asp) in the mitochondrion. The sequence is that of Aspartate--tRNA ligase, mitochondrial (MSD1) from Saccharomyces cerevisiae (strain ATCC 204508 / S288c) (Baker's yeast).